The sequence spans 145 residues: D-aminoacyl-tRNA deacylase (145 aa).

The Gly-cisPro motif, important for rejection of L-amino acids motif lies at 137 to 138 (GP).

Belongs to the DTD family. In terms of assembly, homodimer.

Its subcellular location is the cytoplasm. It catalyses the reaction glycyl-tRNA(Ala) + H2O = tRNA(Ala) + glycine + H(+). The enzyme catalyses a D-aminoacyl-tRNA + H2O = a tRNA + a D-alpha-amino acid + H(+). An aminoacyl-tRNA editing enzyme that deacylates mischarged D-aminoacyl-tRNAs. Also deacylates mischarged glycyl-tRNA(Ala), protecting cells against glycine mischarging by AlaRS. Acts via tRNA-based rather than protein-based catalysis; rejects L-amino acids rather than detecting D-amino acids in the active site. By recycling D-aminoacyl-tRNA to D-amino acids and free tRNA molecules, this enzyme counteracts the toxicity associated with the formation of D-aminoacyl-tRNA entities in vivo and helps enforce protein L-homochirality. This chain is D-aminoacyl-tRNA deacylase, found in Lactobacillus delbrueckii subsp. bulgaricus (strain ATCC BAA-365 / Lb-18).